Consider the following 214-residue polypeptide: Rac-like GTP-binding protein 2 (214 aa).

14-21 serves as a coordination point for GTP; it reads GDGAVGKT. Positions 36 to 44 match the Effector region motif; that stretch reads YIPTVFDNF. GTP contacts are provided by residues 61–65 and 119–122; these read DTAGQ and TKLD.

This sequence belongs to the small GTPase superfamily. Rho family. Post-translationally, may be palmitoylated.

It localises to the cytoplasm. It is found in the membrane. In terms of biological role, inactive GDP-bound Rho GTPases reside in the cytosol, are found in a complex with Rho GDP-dissociation inhibitors (Rho GDIs), and are released from the GDI protein in order to translocate to membranes upon activation. The protein is Rac-like GTP-binding protein 2 (RAC2) of Oryza sativa subsp. japonica (Rice).